Consider the following 325-residue polypeptide: Taste receptor type 2 member 7 (325 aa).

The Extracellular segment spans residues 1–9 (MADKVQTTL). The chain crosses the membrane as a helical span at residues 10–30 (LFLAVGEFSVGILGNAFIGLV). Residues 31–55 (NCMDWVKKRKIASIDLILTSLAISR) are Cytoplasmic-facing. Residues 56 to 76 (ICLLCVILLDCFILVLYPDVY) traverse the membrane as a helical segment. The Extracellular segment spans residues 77 to 94 (ATGKEMRIIDFFWTLTNH). A helical membrane pass occupies residues 95-115 (LSIWFATCLSIYYFFRIANFF). At 116–128 (HPLFLWMKWRIDR) the chain is on the cytoplasmic side. The helical transmembrane segment at 129–149 (VISWILLGCVVLSVFISLPAT) threads the bilayer. Residues 150–187 (ENLNADFRFCVKAKRKTNLTWSCRVNKTQHASTKLFLN) are Extracellular-facing. 2 N-linked (GlcNAc...) asparagine glycosylation sites follow: Asn167 and Asn175. Residues 188–208 (LATLLPFCVCLMSFFLLILSL) form a helical membrane-spanning segment. Topologically, residues 209–235 (RRHIRRMQLSATGCRDPSTEAHVRALK) are cytoplasmic. The helical transmembrane segment at 236-256 (AVISFLLLFIAYYLSFLVATS) threads the bilayer. Topologically, residues 257-266 (SYFMPETELA) are extracellular. The helical transmembrane segment at 267–287 (VIFGESIALIYPSSHSFILIL) threads the bilayer. The Cytoplasmic portion of the chain corresponds to 288–319 (GNNKLRHASLKVIWKVMSILKGRKFQQHKQIG).

The protein belongs to the G-protein coupled receptor T2R family.

It localises to the membrane. In terms of biological role, gustducin-coupled receptor implicated in the perception of bitter compounds in the oral cavity and the gastrointestinal tract. Signals through PLCB2 and the calcium-regulated cation channel TRPM5. This Pan paniscus (Pygmy chimpanzee) protein is Taste receptor type 2 member 7 (TAS2R7).